A 236-amino-acid chain; its full sequence is Truncated formate dehydrogenase 2 (236 aa).

Residues 36-37 (RI), Asp57, 104-108 (PLHKD), Thr130, Asp156, and 185-188 (HISG) contribute to the NAD(+) site.

The protein belongs to the D-isomer specific 2-hydroxyacid dehydrogenase family. FDH subfamily.

This Saccharomyces cerevisiae (strain ATCC 204508 / S288c) (Baker's yeast) protein is Truncated formate dehydrogenase 2.